A 257-amino-acid chain; its full sequence is Zinc transporter ZupT (257 aa).

8 helical membrane passes run L5–G25, L32–M52, G61–L81, A109–V129, L137–A157, I171–I191, M195–L215, and G236–I256. Positions 120 and 123 each coordinate Fe(2+). The Zn(2+) site is built by E123 and H148. Fe(2+) contacts are provided by N149, E152, and E181. E152 provides a ligand contact to Zn(2+).

This sequence belongs to the ZIP transporter (TC 2.A.5) family. ZupT subfamily.

The protein resides in the cell inner membrane. The catalysed reaction is Zn(2+)(in) = Zn(2+)(out). Functionally, mediates zinc uptake. May also transport other divalent cations. This is Zinc transporter ZupT from Shigella flexneri serotype 5b (strain 8401).